The following is a 238-amino-acid chain: Ribonuclease PH (238 aa).

Residues Arg-86 and 124–126 (GTR) each bind phosphate.

This sequence belongs to the RNase PH family. In terms of assembly, homohexameric ring arranged as a trimer of dimers.

The enzyme catalyses tRNA(n+1) + phosphate = tRNA(n) + a ribonucleoside 5'-diphosphate. In terms of biological role, phosphorolytic 3'-5' exoribonuclease that plays an important role in tRNA 3'-end maturation. Removes nucleotide residues following the 3'-CCA terminus of tRNAs; can also add nucleotides to the ends of RNA molecules by using nucleoside diphosphates as substrates, but this may not be physiologically important. Probably plays a role in initiation of 16S rRNA degradation (leading to ribosome degradation) during starvation. In Vibrio parahaemolyticus serotype O3:K6 (strain RIMD 2210633), this protein is Ribonuclease PH.